A 726-amino-acid polypeptide reads, in one-letter code: Catalase-peroxidase (726 aa).

A disordered region spans residues 1-33 (MSTTDDTHNTLSTGKCPFHQGGHDRSAGAGTAS). Residues 105-226 (WHGAGTYRSI…LGATEMGLIY (122 aa)) constitute a cross-link (tryptophyl-tyrosyl-methioninium (Trp-Tyr) (with M-252)). The Proton acceptor role is filled by H106. Positions 226 to 252 (YVNPEGPDHSGEPLSAAAAIRATFGNM) form a cross-link, tryptophyl-tyrosyl-methioninium (Tyr-Met) (with W-105). H267 contacts heme b.

It belongs to the peroxidase family. Peroxidase/catalase subfamily. Homodimer or homotetramer. The cofactor is heme b. Formation of the three residue Trp-Tyr-Met cross-link is important for the catalase, but not the peroxidase activity of the enzyme.

It catalyses the reaction H2O2 + AH2 = A + 2 H2O. The catalysed reaction is 2 H2O2 = O2 + 2 H2O. Bifunctional enzyme with both catalase and broad-spectrum peroxidase activity. The polypeptide is Catalase-peroxidase (Salmonella heidelberg (strain SL476)).